The chain runs to 544 residues: Probable protein kinase UbiB (544 aa).

The Protein kinase domain occupies 123–500; the sequence is DFDEKALASA…RNKQRKSQYL (378 aa). ATP is bound by residues 129 to 137 and Lys-152; that span reads LASASIAQV. The active-site Proton acceptor is Asp-286. Transmembrane regions (helical) follow at residues 499 to 519 and 522 to 542; these read YLLG…ISAS and MAIA…YKSG.

This sequence belongs to the ABC1 family. UbiB subfamily.

The protein localises to the cell inner membrane. Its pathway is cofactor biosynthesis; ubiquinone biosynthesis [regulation]. In terms of biological role, is probably a protein kinase regulator of UbiI activity which is involved in aerobic coenzyme Q (ubiquinone) biosynthesis. Required for the expression of 2'-N-acetyltransferase. The polypeptide is Probable protein kinase UbiB (Providencia stuartii).